The sequence spans 499 residues: Glutamyl-tRNA(Gln) amidotransferase subunit A, mitochondrial (499 aa).

Catalysis depends on charge relay system residues Lys61 and Ser139. Residue Ser163 is the Acyl-ester intermediate of the active site.

The protein belongs to the amidase family. GatA subfamily. As to quaternary structure, subunit of the heterotrimeric GatCAB amidotransferase (AdT) complex, composed of A, B and C subunits.

Its subcellular location is the mitochondrion. The enzyme catalyses L-glutamyl-tRNA(Gln) + L-glutamine + ATP + H2O = L-glutaminyl-tRNA(Gln) + L-glutamate + ADP + phosphate + H(+). Its function is as follows. Allows the formation of correctly charged Gln-tRNA(Gln) through the transamidation of misacylated Glu-tRNA(Gln) in the mitochondria. The reaction takes place in the presence of glutamine and ATP through an activated gamma-phospho-Glu-tRNA(Gln). This is Glutamyl-tRNA(Gln) amidotransferase subunit A, mitochondrial from Coccidioides posadasii (strain C735) (Valley fever fungus).